The following is a 179-amino-acid chain: 6,7-dimethyl-8-ribityllumazine synthase (179 aa).

5-amino-6-(D-ribitylamino)uracil is bound by residues tryptophan 13, alanine 45–glutamate 47, and valine 68–isoleucine 70. Aspartate 73–threonine 74 contributes to the (2S)-2-hydroxy-3-oxobutyl phosphate binding site. Histidine 76 (proton donor) is an active-site residue. Phenylalanine 101 is a 5-amino-6-(D-ribitylamino)uracil binding site. Arginine 115 contributes to the (2S)-2-hydroxy-3-oxobutyl phosphate binding site. A disordered region spans residues alanine 157–lysine 179.

The protein belongs to the DMRL synthase family.

It carries out the reaction (2S)-2-hydroxy-3-oxobutyl phosphate + 5-amino-6-(D-ribitylamino)uracil = 6,7-dimethyl-8-(1-D-ribityl)lumazine + phosphate + 2 H2O + H(+). It participates in cofactor biosynthesis; riboflavin biosynthesis; riboflavin from 2-hydroxy-3-oxobutyl phosphate and 5-amino-6-(D-ribitylamino)uracil: step 1/2. Functionally, catalyzes the formation of 6,7-dimethyl-8-ribityllumazine by condensation of 5-amino-6-(D-ribitylamino)uracil with 3,4-dihydroxy-2-butanone 4-phosphate. This is the penultimate step in the biosynthesis of riboflavin. In Bdellovibrio bacteriovorus (strain ATCC 15356 / DSM 50701 / NCIMB 9529 / HD100), this protein is 6,7-dimethyl-8-ribityllumazine synthase.